We begin with the raw amino-acid sequence, 316 residues long: Olfactory receptor 4N4 (316 aa).

At 1-25 (MKIANNTVVTEFILLGLTQSQDIQL) the chain is on the extracellular side. An N-linked (GlcNAc...) asparagine glycan is attached at asparagine 5. The helical transmembrane segment at 26 to 49 (LVFVLILIFYLIILPGNFLIIFTI) threads the bilayer. Topologically, residues 50 to 57 (RSDPGLTA) are cytoplasmic. The helical transmembrane segment at 58 to 79 (PLYLFLGNLAFLDASYSFIVAP) threads the bilayer. Residues 80 to 100 (RMLVDFLSEKKVISYRGCITQ) lie on the Extracellular side of the membrane. The cysteines at positions 97 and 189 are disulfide-linked. A helical membrane pass occupies residues 101–120 (LFFLHFLGGGEGLLLVVMAF). Residues 121–139 (DRYIAICRPLHCSTVMNPR) lie on the Cytoplasmic side of the membrane. Residues 140–158 (ACYAMMLALWLGGFVHSII) traverse the membrane as a helical segment. Topologically, residues 159 to 195 (QVVLILRLPFCGPNQLDNFFCDVRQVIKLACTDMFVV) are extracellular. Residues 196 to 219 (ELLMVFNSGLMTLLCFLGLLASYA) form a helical membrane-spanning segment. At 220-235 (VILCHVRRAASEGKNK) the chain is on the cytoplasmic side. The chain crosses the membrane as a helical span at residues 236–258 (AMSTCTTRVIIILLMFGPAIFIY). At 259–269 (MCPFRALPADK) the chain is on the extracellular side. Residues 270–289 (MVSLFHTVIFPLMNPMIYTL) traverse the membrane as a helical segment. Residues 290-316 (RNQEVKTSMKRLLSRHVVCQVDFIIRN) are Cytoplasmic-facing.

The protein belongs to the G-protein coupled receptor 1 family.

It is found in the cell membrane. Odorant receptor. This is Olfactory receptor 4N4 (OR4N4) from Homo sapiens (Human).